A 190-amino-acid polypeptide reads, in one-letter code: Elongation factor P-like protein (190 aa).

It belongs to the elongation factor P family.

This chain is Elongation factor P-like protein, found in Cronobacter sakazakii (strain ATCC BAA-894) (Enterobacter sakazakii).